We begin with the raw amino-acid sequence, 706 residues long: MALSPVRVTEGKPLGVYFYNVWREARLVIWYVSYTPSGQTEALDFVFVVQEVCDEKWSALPASAGEASAFESGIHTILWERELRGHNEWIAALEGRGGEVFVFEADAGRVLTGLRVKGEEEGVGGGGGGGGEGEYSPETLRNAYFFSQSRQEFSSGRGGDAGREEAGAPVSGKEKLWFRGMVEDVCVSDVDIVIRTARGVYSCPGGDGGEEGDGAEGGDGGVGGAGDGAGAGGGSSGKPPAGKRGRPTRLRITDLFRPVDCELAWRGRAVKLRPVLADFDVMWANPESAWNCCLPEFFRALLARTTRDFEGLPPALLYVFPAACREGSRFPPHFAGFPFFRVLFEPMRRVTADWLVAGDDRPPGGILLHHPPFYRSRLADRVLCPGLRGDEIVRRARAGGGNCWPLFATELNEGLCPEGRHDLLRVERAHALLTLDLARAACSMLGARVENPGEFLARVVETGSRDLLNAATSAYNLLLTGVLRWAAEAGFAWAAIDKSRVFLVSEAEPPSEDAEEIEESLWASLGDHPPPCVGLVSGYGRENASVFLLWKSDRVLVGKSSDLSCPERRCGSWRESLDAALSLTLTEAPDPAGILRELMPSYHAHRHETKFWLVDRAFAAGRPERAPPMPVDCLRPAPYLLIGEGAVCWHEALDLPLDVDFAAYLSETLSCVSAALAPPGGGGEAGEGRNNTDHCLEEFKSVLSLL.

Residues 203–249 (CPGGDGGEEGDGAEGGDGGVGGAGDGAGAGGGSSGKPPAGKRGRPTR) form a disordered region. Residues 217–236 (GGDGGVGGAGDGAGAGGGSS) are compositionally biased toward gly residues.

This sequence belongs to the herpesviridae HEPA family. As to quaternary structure, associates with the primase and the helicase to form the helicase-primase complex. Interacts with the origin-binding protein. Interacts with the polymerase catalytic subunit.

The protein resides in the host nucleus. Component of the helicase/primase complex. Unwinds the DNA at the replication forks and generates single-stranded DNA for both leading and lagging strand synthesis. The primase synthesizes short RNA primers on the lagging strand that the polymerase presumably elongates using dNTPs. The primase-associated factor has no known catalytic activity in the complex and may serve to facilitate the formation of the replisome by directly interacting with the origin-binding protein and the polymerase. In Equus caballus (Horse), this protein is DNA helicase/primase complex-associated protein (40).